An 86-amino-acid chain; its full sequence is Putative membrane protein insertion efficiency factor (86 aa).

Belongs to the UPF0161 family.

It is found in the cell inner membrane. Functionally, could be involved in insertion of integral membrane proteins into the membrane. This is Putative membrane protein insertion efficiency factor from Pseudomonas aeruginosa (strain LESB58).